The following is a 267-amino-acid chain: Hydroxyethylthiazole kinase (267 aa).

Met48 provides a ligand contact to substrate. The ATP site is built by Arg124 and Ser170. Gly197 contributes to the substrate binding site.

Belongs to the Thz kinase family. It depends on Mg(2+) as a cofactor.

The enzyme catalyses 5-(2-hydroxyethyl)-4-methylthiazole + ATP = 4-methyl-5-(2-phosphooxyethyl)-thiazole + ADP + H(+). It functions in the pathway cofactor biosynthesis; thiamine diphosphate biosynthesis; 4-methyl-5-(2-phosphoethyl)-thiazole from 5-(2-hydroxyethyl)-4-methylthiazole: step 1/1. In terms of biological role, catalyzes the phosphorylation of the hydroxyl group of 4-methyl-5-beta-hydroxyethylthiazole (THZ). The chain is Hydroxyethylthiazole kinase from Aliivibrio fischeri (strain ATCC 700601 / ES114) (Vibrio fischeri).